A 423-amino-acid polypeptide reads, in one-letter code: Gamma-glutamyl phosphate reductase (423 aa).

Belongs to the gamma-glutamyl phosphate reductase family.

The protein resides in the cytoplasm. It carries out the reaction L-glutamate 5-semialdehyde + phosphate + NADP(+) = L-glutamyl 5-phosphate + NADPH + H(+). The protein operates within amino-acid biosynthesis; L-proline biosynthesis; L-glutamate 5-semialdehyde from L-glutamate: step 2/2. Functionally, catalyzes the NADPH-dependent reduction of L-glutamate 5-phosphate into L-glutamate 5-semialdehyde and phosphate. The product spontaneously undergoes cyclization to form 1-pyrroline-5-carboxylate. The protein is Gamma-glutamyl phosphate reductase of Burkholderia lata (strain ATCC 17760 / DSM 23089 / LMG 22485 / NCIMB 9086 / R18194 / 383).